Reading from the N-terminus, the 785-residue chain is Cation/H(+) antiporter 1 (785 aa).

Helical transmembrane passes span 19 to 39, 44 to 64, 79 to 99, 112 to 132, 143 to 163, 179 to 199, 201 to 221, 240 to 260, 294 to 314, 323 to 343, 352 to 372, and 389 to 409; these read LNTM…FYLF, GQAG…LTII, YYIF…GLEI, IVIT…FLWF, FLTF…PVVI, LAIS…TIVL, FISG…GVII, YLSK…ALTI, YPIH…RFSV, LVLG…VLFA, QYWL…LVLL, and MFVA…SLLL.

Belongs to the monovalent cation:proton antiporter 2 (CPA2) transporter (TC 2.A.37) family. CHX (TC 2.A.37.4) subfamily. Specifically expressed in pollen.

Its subcellular location is the membrane. May operate as a cation/H(+) antiporter. This chain is Cation/H(+) antiporter 1 (CHX1), found in Arabidopsis thaliana (Mouse-ear cress).